We begin with the raw amino-acid sequence, 529 residues long: Delayed-rectifier potassium channel regulatory subunit KCNS1 (529 aa).

The Cytoplasmic portion of the chain corresponds to 1 to 217; it reads MLMLLVRGTR…LTMENPGYSL (217 aa). The chain crosses the membrane as a helical span at residues 218–239; that stretch reads PSKLFSCVSISVVLASIAAMCI. At 240–270 the chain is on the extracellular side; it reads HSLPEYQAREAAAAVAAVAAGRSPEGVRDDP. Residues 271–293 form a helical membrane-spanning segment; the sequence is VLRRLEYFCIAWFSFEVSSRLLL. At 294 to 304 the chain is on the cytoplasmic side; that stretch reads APSTRNFFCHP. The chain crosses the membrane as a helical span at residues 305–322; that stretch reads LNLIDIVSVLPFYLTLLA. At 323–340 the chain is on the extracellular side; that stretch reads GVALGDQGGTGGKELGHL. The chain crosses the membrane as a helical; Voltage-sensor span at residues 341–361; the sequence is GKVVQVFRLMRIFRVLKLARH. Over 362-376 the chain is Cytoplasmic; sequence STGLRSLGATLKHSY. Residues 377–398 form a helical membrane-spanning segment; the sequence is REVGILLLYLAVGVSVFSGVAY. Residues 399 to 411 lie on the Extracellular side of the membrane; the sequence is TAEKEEDVGFNTI. The helical intramembrane region spans 412–423; that stretch reads PACWWWGTVSMT. The Selectivity filter signature appears at 424 to 429; that stretch reads TVGYGD. Residues 424-431 lie within the membrane without spanning it; the sequence is TVGYGDVV. Residues 432 to 438 are Extracellular-facing; the sequence is PVTVAGK. Residues 439–467 traverse the membrane as a helical segment; it reads LAASGCILGGILVVALPITIIFNKFSHFY. Residues 468–529 lie on the Cytoplasmic side of the membrane; sequence RRQKALEAAV…PSEPPHPQMY (62 aa). A disordered region spans residues 500–529; sequence LETSREISQEGRSADLETQAPSEPPHPQMY. The segment covering 502 to 514 has biased composition (basic and acidic residues); the sequence is TSREISQEGRSAD.

Belongs to the potassium channel family. S (TC 1.A.1.2) subfamily. Kv9.1/KCNS1 sub-subfamily. In terms of assembly, heterotetramer with KCNB1. Heterotetramer with KCNB2. Does not form homomultimers.

The protein resides in the cell membrane. Its function is as follows. Potassium channel regulatory subunit that modulate the delayed rectifier voltage-gated potassium channel activity of KCNB1 and KCNB2 by altering their kinetics, expression levels, and shifting the half-inactivation potential to more polarized values. While it does not form functional channels on its own, it can form functional heterotetrameric channels with KCNB1 and KCNB2. Each regulatory subunit has unique regulatory properties that can lead to extensive inhibition, significant changes in kinetics, and/or substantial shifts in the voltage dependencies of the inactivation process. This is Delayed-rectifier potassium channel regulatory subunit KCNS1 from Colobus guereza (Mantled guereza).